Consider the following 160-residue polypeptide: Small ribosomal subunit protein bS16 (160 aa).

The disordered stretch occupies residues 115 to 139; that stretch reads GGPTTEATRPKKKVSAKKAAKAVES. Residues 124–134 show a composition bias toward basic residues; sequence PKKKVSAKKAA.

This sequence belongs to the bacterial ribosomal protein bS16 family.

In Mycobacterium leprae (strain Br4923), this protein is Small ribosomal subunit protein bS16.